The following is a 377-amino-acid chain: Sodium-dependent organic anion transporter (377 aa).

Over 1–29 (MRANCSSGLACPANSSEEELPEGLKAFGN) the chain is Extracellular. The N-linked (GlcNAc...) asparagine glycan is linked to Asn-4. Residues 30–50 (LDLVFTVVSALMIGLLMFSLG) form a helical membrane-spanning segment. At 51–67 (CSVEVQKLWGHIRRPWG) the chain is on the cytoplasmic side. Residues 68-88 (IAVGMLCQFGLMPLIAYLLII) form a helical membrane-spanning segment. Residues 89 to 97 (SFSLKPLQA) lie on the Extracellular side of the membrane. A helical membrane pass occupies residues 98-118 (IAVLIMGCCPGGTVSNIFTFW). The Cytoplasmic segment spans residues 119–133 (VDGDMDLSISMTTCS). Residues 134–154 (TMAALGMMPLCLYLYTLSWNL) traverse the membrane as a helical segment. The Extracellular portion of the chain corresponds to 155–159 (EQNLT). N-linked (GlcNAc...) asparagine glycosylation occurs at Asn-157. Residues 160–180 (IPYQNIGITLVCLIIPVAFGI) traverse the membrane as a helical segment. Over 181 to 195 (YVNYRWPKQSKIILK) the chain is Cytoplasmic. A helical transmembrane segment spans residues 196–216 (IGAIAGGLLFLVVTGAGMVLM). At 217 to 223 (KEFWSSD) the chain is on the extracellular side. Residues 224–244 (IILLMISFIFPLIGHATGFLL) form a helical membrane-spanning segment. Topologically, residues 245–257 (ALLTHQSWQRCRT) are cytoplasmic. The chain crosses the membrane as a helical span at residues 258–278 (ISLETGTQNVQMCFTMLQLSF). Residues 279-285 (TAEQLVQ) are Extracellular-facing. Residues 286–306 (IFGFVLAYGLFQMLNGFFMVA) form a helical membrane-spanning segment. Over 307–377 (AYKMYKRRLK…TPTGDIARAK (71 aa)) the chain is Cytoplasmic. The tract at residues 319-377 (HGNEKPSCQEARHRKKSTSPKETTAFLEVNEEATLSPGPSGPVDPHGAPTPTGDIARAK) is disordered.

The protein belongs to the bile acid:sodium symporter (BASS) (TC 2.A.28) family. Post-translationally, glycosylated.

The protein localises to the membrane. It carries out the reaction estrone 3-sulfate(out) + 2 Na(+)(out) = estrone 3-sulfate(in) + 2 Na(+)(in). It catalyses the reaction 17beta-estradiol 3-sulfate(out) + 2 Na(+)(out) = 17beta-estradiol 3-sulfate(in) + 2 Na(+)(in). The catalysed reaction is dehydroepiandrosterone 3-sulfate(out) + 2 Na(+)(out) = dehydroepiandrosterone 3-sulfate(in) + 2 Na(+)(in). The enzyme catalyses androst-5-ene-diol 3-sulfate(out) + 2 Na(+)(out) = androst-5-ene-diol 3-sulfate(in) + 2 Na(+)(in). It carries out the reaction pregnenolone sulfate(out) + 2 Na(+)(out) = pregnenolone sulfate(in) + 2 Na(+)(in). It catalyses the reaction taurolithocholate 3-sulfate(out) + 2 Na(+)(out) = taurolithocholate 3-sulfate(in) + 2 Na(+)(in). The catalysed reaction is androsterone 3alpha-sulfate(out) + 2 Na(+)(out) = androsterone 3alpha-sulfate(in) + 2 Na(+)(in). The enzyme catalyses 5alpha-dihydrotestosterone sulfate(out) + 2 Na(+)(out) = 5alpha-dihydrotestosterone sulfate(in) + 2 Na(+)(in). It carries out the reaction 17beta-estradiol 17-sulfate(out) + 2 Na(+)(out) = 17beta-estradiol 17-sulfate(in) + 2 Na(+)(in). It catalyses the reaction 17alpha-hydroxypregnenolone 3-sulfate(out) + 2 Na(+)(out) = 17alpha-hydroxypregnenolone 3-sulfate(in) + 2 Na(+)(in). The catalysed reaction is epiandrosterone 3-sulfate(out) + 2 Na(+)(out) = epiandrosterone 3-sulfate(in) + 2 Na(+)(in). The enzyme catalyses epitestosterone 17-sulfate(out) + 2 Na(+)(out) = epitestosterone 17-sulfate(in) + 2 Na(+)(in). It carries out the reaction testosterone 17-sulfate(out) + 2 Na(+)(out) = testosterone 17-sulfate(in) + 2 Na(+)(in). It catalyses the reaction 16alpha-hydroxydehydroepiandrosterone 3-sulfate(out) + 2 Na(+)(out) = 16alpha-hydroxydehydroepiandrosterone 3-sulfate(in) + 2 Na(+)(in). In terms of biological role, transports sulfoconjugated steroid hormones from the extracellular compartment into the cytosol in a sodium-dependent manner without hydrolysis. Steroid sulfate hormones are commonly considered to be biologically inactive metabolites, that may be activated by steroid sulfatases into free steroids. May play an important role by delivering sulfoconjugated steroids to specific target cells in reproductive organs. May play a role transporting the estriol precursor 16alpha-hydroxydehydroepiandrosterone 3-sulfate (16a-OH-DHEAS) at the fetal blood vessel endothelium. Can also transport other sulfoconjugated molecules such as taurolithocholic acid-3-sulfate and sulfoconjugated pyrenes. This Bos taurus (Bovine) protein is Sodium-dependent organic anion transporter (SLC10A6).